Consider the following 722-residue polypeptide: Mating-type switching protein swi2 (722 aa).

2 disordered regions span residues 1-35 (MNVNKKQESIPVNTGSESISSNDNERFEQGKGVGS) and 301-342 (SEEF…PLPS). Over residues 9–22 (SIPVNTGSESISSN) the composition is skewed to polar residues. Residues 302–316 (EEFDFEPSREDEDFP) show a composition bias toward acidic residues. Residues 319-332 (TSDSTGQDPLSSEP) show a composition bias toward polar residues.

As to quaternary structure, interacts with swi5 and rhp51.

Its function is as follows. Required for normal mating-type switching. This Schizosaccharomyces pombe (strain 972 / ATCC 24843) (Fission yeast) protein is Mating-type switching protein swi2 (swi2).